The following is a 230-amino-acid chain: Complex I assembly factor TMEM126B, mitochondrial (230 aa).

Position 34 is a phosphoserine (S34). The next 4 membrane-spanning stretches (helical) occupy residues 72–92 (IYQM…SNFL), 110–130 (LATL…IDAL), 141–161 (VFRS…SLAF), and 199–219 (IPLV…YAVF).

This sequence belongs to the TMEM126 family. Part of the mitochondrial complex I assembly/MCIA complex that comprises at least the core subunits TMEM126B, NDUFAF1, ECSIT and ACAD9 and complement subunits such as COA1 and TMEM186. Associates with the intermediate 370 kDa subcomplex of incompletely assembled complex I. Interacts with TMEM70.

The protein resides in the mitochondrion membrane. As part of the MCIA complex, involved in the assembly of the mitochondrial complex I. Participates in constructing the membrane arm of complex I. The protein is Complex I assembly factor TMEM126B, mitochondrial of Homo sapiens (Human).